The following is a 640-amino-acid chain: Serine/threonine-protein kinase ELM1 (640 aa).

Residues 27–47 (ELDSPPITPTSQTSSFGSSFS) form a disordered region. Residues 35 to 47 (PTSQTSSFGSSFS) show a composition bias toward low complexity. The 333-residue stretch at 88 to 420 (YTLGVSAGSG…PIDSRNHSQI (333 aa)) folds into the Protein kinase domain. Residues 94–102 (AGSGQFGYV) and Lys117 each bind ATP. Residue Ser152 is modified to Phosphoserine. Asp259 acts as the Proton acceptor in catalysis. Phosphoserine is present on residues Ser516 and Ser519. Positions 520–529 (LPNLTVNNDK) are enriched in polar residues. 2 disordered regions span residues 520-547 (LPNLTVNNDKQNSDMKTDRSESSSHSSL) and 562-587 (SPKENGNRTHINCSQDKPSSPLMDRT). Residues 530 to 541 (QNSDMKTDRSES) are compositionally biased toward basic and acidic residues. Positions 569 to 579 (RTHINCSQDKP) are enriched in polar residues.

This sequence belongs to the protein kinase superfamily. Ser/Thr protein kinase family. The cofactor is Mg(2+).

It carries out the reaction L-seryl-[protein] + ATP = O-phospho-L-seryl-[protein] + ADP + H(+). It catalyses the reaction L-threonyl-[protein] + ATP = O-phospho-L-threonyl-[protein] + ADP + H(+). Its function is as follows. Important role in G1 events required for bud emergence and septin organization. Coordinates cell growth and cell division at G2/M, essential for efficient cytokinesis and for regulation of SWE1. In Saccharomyces cerevisiae (strain ATCC 204508 / S288c) (Baker's yeast), this protein is Serine/threonine-protein kinase ELM1 (ELM1).